Reading from the N-terminus, the 454-residue chain is Cobyrinate a,c-diamide synthase (454 aa).

In terms of domain architecture, GATase cobBQ-type spans 244–440; that stretch reads RLGIAKDKAF…LHVHFYQNPK (197 aa). The active-site Nucleophile is the Cys-326.

The protein belongs to the CobB/CbiA family. Mg(2+) serves as cofactor.

It catalyses the reaction cob(II)yrinate + 2 L-glutamine + 2 ATP + 2 H2O = cob(II)yrinate a,c diamide + 2 L-glutamate + 2 ADP + 2 phosphate + 2 H(+). The protein operates within cofactor biosynthesis; adenosylcobalamin biosynthesis; cob(II)yrinate a,c-diamide from sirohydrochlorin (anaerobic route): step 10/10. Catalyzes the ATP-dependent amidation of the two carboxylate groups at positions a and c of cobyrinate, using either L-glutamine or ammonia as the nitrogen source. This Limosilactobacillus reuteri subsp. reuteri (strain JCM 1112) (Lactobacillus reuteri) protein is Cobyrinate a,c-diamide synthase.